A 378-amino-acid polypeptide reads, in one-letter code: Putative glutamate--cysteine ligase 2 (378 aa).

This sequence belongs to the glutamate--cysteine ligase type 2 family. YbdK subfamily.

The enzyme catalyses L-cysteine + L-glutamate + ATP = gamma-L-glutamyl-L-cysteine + ADP + phosphate + H(+). ATP-dependent carboxylate-amine ligase which exhibits weak glutamate--cysteine ligase activity. This chain is Putative glutamate--cysteine ligase 2, found in Leifsonia xyli subsp. xyli (strain CTCB07).